Here is a 464-residue protein sequence, read N- to C-terminus: Glutamate--tRNA ligase (464 aa).

The 'HIGH' region motif lies at 10–20 (PSPTGYLHIGG). Positions 113 to 130 (QEAKKEKPRYDGRWRPEA) are enriched in basic and acidic residues. Residues 113–142 (QEAKKEKPRYDGRWRPEAGKALPVPPTDVP) are disordered. The 'KMSKS' region signature appears at 242-246 (KLSKR). Lys-245 is a binding site for ATP.

This sequence belongs to the class-I aminoacyl-tRNA synthetase family. Glutamate--tRNA ligase type 1 subfamily. As to quaternary structure, monomer.

Its subcellular location is the cytoplasm. The enzyme catalyses tRNA(Glu) + L-glutamate + ATP = L-glutamyl-tRNA(Glu) + AMP + diphosphate. Functionally, catalyzes the attachment of glutamate to tRNA(Glu) in a two-step reaction: glutamate is first activated by ATP to form Glu-AMP and then transferred to the acceptor end of tRNA(Glu). This Dechloromonas aromatica (strain RCB) protein is Glutamate--tRNA ligase.